Here is a 699-residue protein sequence, read N- to C-terminus: Elongation factor G (699 aa).

Residues 8 to 286 (EKLRNIGIVA…AVIVTYPLPI (279 aa)) form the tr-type G domain. Residues 17 to 24 (AHIDAGKT), 84 to 88 (DTPGH), and 138 to 141 (NKMD) contribute to the GTP site.

This sequence belongs to the TRAFAC class translation factor GTPase superfamily. Classic translation factor GTPase family. EF-G/EF-2 subfamily.

The protein resides in the cytoplasm. In terms of biological role, catalyzes the GTP-dependent ribosomal translocation step during translation elongation. During this step, the ribosome changes from the pre-translocational (PRE) to the post-translocational (POST) state as the newly formed A-site-bound peptidyl-tRNA and P-site-bound deacylated tRNA move to the P and E sites, respectively. Catalyzes the coordinated movement of the two tRNA molecules, the mRNA and conformational changes in the ribosome. The chain is Elongation factor G (fusA) from Aquifex pyrophilus.